A 363-amino-acid chain; its full sequence is NADH-quinone oxidoreductase subunit H (363 aa).

The next 10 membrane-spanning stretches (helical) occupy residues 29-49 (VLKILLIAVPVIVTVAFYVVW), 62-82 (GPMYVGMGIFQAFADVFKLLF), 96-116 (FIIAPLLTLAPAFAAWSVVPF), 127-147 (VGLLYLLAMTSLGVYGIILAG), 163-183 (AAQVVSYEIAMGFALVGVMIA), 202-222 (FFDWFLIPLFPLFIVYWVSGV), 239-257 (IVAGHMVEYSGGAFALFFL), 264-286 (ILVSFLISIFFLGGWLSPIQGWV), 299-319 (TGGWPWLLMKVFFFASAYIWF), and 339-359 (FIPLTIVWIAVTALMVFYGVI).

The protein belongs to the complex I subunit 1 family. NDH-1 is composed of 14 different subunits. Subunits NuoA, H, J, K, L, M, N constitute the membrane sector of the complex.

The protein localises to the cell inner membrane. The catalysed reaction is a quinone + NADH + 5 H(+)(in) = a quinol + NAD(+) + 4 H(+)(out). Functionally, NDH-1 shuttles electrons from NADH, via FMN and iron-sulfur (Fe-S) centers, to quinones in the respiratory chain. The immediate electron acceptor for the enzyme in this species is believed to be ubiquinone. Couples the redox reaction to proton translocation (for every two electrons transferred, four hydrogen ions are translocated across the cytoplasmic membrane), and thus conserves the redox energy in a proton gradient. This subunit may bind ubiquinone. In Xanthomonas campestris pv. campestris (strain 8004), this protein is NADH-quinone oxidoreductase subunit H.